A 475-amino-acid polypeptide reads, in one-letter code: MSNCELTVLKPAEVKLSPRDREGIINPMYDCQPAGAQYAGIGIKDCIPLVHGGQGCTMFVRLLFAQHFKENFDVASTSLHEESAVFGGAKRVEEGVLVLARRYPNLRVIPIITTCSTEVIGDDIEGSIRVCNRALEAEFPDRKIYLAPVHTPSFKGSHVTGYAECVKSVFKTITDAHGKGQPSGKLNVFPGWVNPGDVVLLKRYFKEMDVEANIYMDTEDFDSPMLPNKSIETHGRTTVEDIADSANALATLSLARYEGNTTGELLQKTFAVPNALVNTPYGIKNTDDMLRKIAEVTGKEIPESLVRERGIALDALADLAHMFFANKKVAIFGHPDLVLGLAQFCMEVELEPVLLLIGDDQGNKYKKDPRIEELKNTAHFDIEIVHNADLWELEKRINAGLQLDLIMGHSKGRYVAIEANIPMVRVGFPTFDRAGLYRKPSIGYQGAMELGEMIANAMFAHMEYTRNKEWILNTW.

C31, C56, C115, and S153 together coordinate [8Fe-7S] cluster.

It belongs to the NifD/NifK/NifE/NifN family. Hexamer of two alpha, two beta, and two delta chains. Requires [8Fe-7S] cluster as cofactor.

The catalysed reaction is N2 + 8 reduced [2Fe-2S]-[ferredoxin] + 16 ATP + 16 H2O = H2 + 8 oxidized [2Fe-2S]-[ferredoxin] + 2 NH4(+) + 16 ADP + 16 phosphate + 6 H(+). This vanadium-iron protein is part of the nitrogenase complex that catalyzes the key enzymatic reactions in nitrogen fixation. In Azotobacter vinelandii, this protein is Nitrogenase vanadium-iron protein beta chain (vnfK).